We begin with the raw amino-acid sequence, 120 residues long: Nitrogen regulatory protein GlnK1 (120 aa).

ADP is bound by residues T40, 48–50 (GEQ), V75, and 98–101 (GDGR). ATP-binding positions include T40, 48 to 50 (GEQ), V75, and 98 to 101 (GDGR).

The protein belongs to the P(II) protein family. Homotrimer. Interacts and forms a complex with Amt1.

It is found in the cytoplasm. In terms of biological role, involved in the regulation of nitrogen metabolism. Regulates the activity of its targets by protein-protein interaction in response to the nitrogen status of the cell. Regulates the activity of the ammonia channel Amt1 via direct interaction. This Archaeoglobus fulgidus (strain ATCC 49558 / DSM 4304 / JCM 9628 / NBRC 100126 / VC-16) protein is Nitrogen regulatory protein GlnK1.